The primary structure comprises 744 residues: 4'-phospho-dehydrooxetanocin synthase (744 aa).

One can recognise a B12-binding domain in the interval Thr-119–Asp-259. 6 residues coordinate cob(II)alamin: Arg-135, Ser-139, Ser-184, Gly-241, Glu-242, and Glu-308. The region spanning Ser-299–Glu-545 is the Radical SAM core domain. Residues Cys-313, Cys-318, and Cys-321 each coordinate [4Fe-4S] cluster. Residues Pro-322, His-325, Lys-326, Ala-361, and Glu-363 each coordinate cob(II)alamin. Residues Glu-436 and Glu-545 each contribute to the S-adenosyl-L-methionine site.

It belongs to the radical SAM superfamily. It depends on [4Fe-4S] cluster as a cofactor. Cob(II)alamin serves as cofactor.

The enzyme catalyses dAMP + S-adenosyl-L-methionine = 4'-phospho-dehydrooxetanocin + 5'-deoxyadenosine + L-methionine + H(+). The catalysed reaction is AH2 + 2 S-adenosyl-L-methionine = 2 5'-deoxyadenosin-5'-yl radical + 2 L-methionine + A + 2 H(+). It catalyses the reaction 2 5'-deoxyadenosin-5'-yl radical + 2 dAMP + A = 2 4'-phospho-dehydrooxetanocin + 2 5'-deoxyadenosine + AH2. Requires OxsA for the oxidative ring contraction activity. Activation of OxsB requires its direct interaction with OxsA and is independent of OxsA phosphohydrolase activity. In contrast to ring contraction, methylation does not require the presence of OxsA. Its function is as follows. Isomerase involved in the biosynthesis of oxetanocin A (OXT-A), a nucleoside analog with antitumor, antiviral and antibacterial properties. Catalyzes an oxidative ring contraction of dAMP, forming an oxetane aldehyde. In addition, shows methyltransferase activity in vitro and is able to catalyze the radical mediated, stereoselective C2'-methylation of dAMP to form methylated 2'-dAMP. Also catalyzes the demethylation of S-adenosyl-L-methionine (SAM) to S-adenosyl-L-homocysteine (SAH). The protein is 4'-phospho-dehydrooxetanocin synthase of Priestia megaterium (Bacillus megaterium).